A 283-amino-acid chain; its full sequence is MLQTARQDQEVLVEMRNAGVHRSGRWLVRGVDLTVRRGEIVTLIGPNGSGKSTTVKMAIGVLQPDEGAVRRMPSLKVGYVPQKVSIDWTLPLSVERLMALTGTLDRKKVGEALEAAGIAHLARAEVQTLSGGEFQRALLARALAREPDLLVLDEPVQGVDFTGEIALYQLISEIRDRTGCGVLLISHDLHVVMAATDTVICLNGHICCRGTPEKVLKSPEYVRLFGARAGDTLAIYHHHHDHTHLADGRVRQADGTIVDDCHAHHHDHARDGGQGGGGHGHAG.

The region spanning 13–228 (VEMRNAGVHR…PEYVRLFGAR (216 aa)) is the ABC transporter domain. 45–52 (GPNGSGKS) is an ATP binding site. The segment at 264–283 (HHHDHARDGGQGGGGHGHAG) is disordered. The span at 272–283 (GGQGGGGHGHAG) shows a compositional bias: gly residues.

Belongs to the ABC transporter superfamily. Zinc importer (TC 3.A.1.15.5) family. In terms of assembly, the complex is composed of two ATP-binding proteins (ZnuC), two transmembrane proteins (ZnuB) and a solute-binding protein (ZnuA).

It localises to the cell inner membrane. The enzyme catalyses Zn(2+)(out) + ATP(in) + H2O(in) = Zn(2+)(in) + ADP(in) + phosphate(in) + H(+)(in). In terms of biological role, part of the ABC transporter complex ZnuABC involved in zinc import. Responsible for energy coupling to the transport system. The polypeptide is Zinc import ATP-binding protein ZnuC (Chelativorans sp. (strain BNC1)).